The primary structure comprises 631 residues: uncharacterized protein (631 aa).

An N-terminal signal peptide occupies residues 1–20; it reads MVRFVSILSLFGCAATLVTA. The Lumenal portion of the chain corresponds to 21–105; the sequence is HDDMDMDMDM…AGNRSALRYH (85 aa). N-linked (GlcNAc...) asparagine glycans are attached at residues Asn87 and Asn98. The chain crosses the membrane as a helical span at residues 106-126; the sequence is IITLLLVAFVLYPVSLALSAA. The Cytoplasmic segment spans residues 127-131; it reads RSRWY. The helical transmembrane segment at 132–152 threads the bilayer; the sequence is LPLLFVNLCICISSVMALSVF. At 153–170 the chain is on the lumenal side; that stretch reads KNTFPEEDWYAHNIYGTT. The helical transmembrane segment at 171–191 threads the bilayer; the sequence is SVLLLVFMLVHFFAAVLSVPV. Residues 192–322 lie on the Cytoplasmic side of the membrane; it reads SLASKKEYRP…LSCVANVVFH (131 aa). The interval 216–274 is disordered; the sequence is MVNSARGSPSPSSNRDTLFSLSSDTTTATATNNNKRRRAEGEDEGDNTSNHDTLRDEDY. Ser219 is subject to Phosphoserine. The segment covering 220 to 239 has biased composition (polar residues); that stretch reads ARGSPSPSSNRDTLFSLSSD. Lys250 participates in a covalent cross-link: Glycyl lysine isopeptide (Lys-Gly) (interchain with G-Cter in ubiquitin). A helical membrane pass occupies residues 323-343; sequence MLTYPLFMYIFVDLIIGFAVG. Topologically, residues 344–351 are lumenal; sequence NLLGKGIR. A helical membrane pass occupies residues 352–372; the sequence is IFNLLAHWIKGGVFFTLGVVS. The Cytoplasmic portion of the chain corresponds to 373–407; sequence LARYCGFAAKYGWAWNNISFTSQLTQTRSSNLLFR. The chain crosses the membrane as a helical span at residues 408–428; that stretch reads FAPAGTFTMEFVESFLIFFYG. Residues 429-451 are Lumenal-facing; the sequence is STNIFLEHLAGNGGAWTAKDLQH. The chain crosses the membrane as a helical span at residues 452 to 472; the sequence is VSIAFMFIGTGLCGLLTEYKL. Topologically, residues 473–529 are cytoplasmic; that stretch reads NHWRFEHARKRPQTDVVAATPGYSPNPFPAFTIFWTGILMSQHAQSSQFSTTIHTQW. Residues 530-550 traverse the membrane as a helical segment; that stretch reads GYLLSYGSFFRLLTFLILFLV. Residues 551–598 are Lumenal-facing; the sequence is PNTNSAASKPFTELITSFCLLCGGLVFMESTDQSIEAMEYRGFTPMFT. The helical transmembrane segment at 599–619 threads the bilayer; sequence FNLSVGFVSLLMAWEMILFIW. The Cytoplasmic segment spans residues 620–631; that stretch reads KDWLIKTRKTSL.

It to S.pombe SpBC3B8.06.

The protein localises to the membrane. This is an uncharacterized protein from Saccharomyces cerevisiae (strain ATCC 204508 / S288c) (Baker's yeast).